Consider the following 538-residue polypeptide: Calcyphosin-2 (538 aa).

The span at 134–146 (RNAENTKSNVTHK) shows a compositional bias: polar residues. Residues 134-154 (RNAENTKSNVTHKQSPRNKID) are disordered. 3 EF-hand domains span residues 426–461 (RILT…FHLE), 462–497 (VSEK…EMNE), and 498–533 (YRKS…KKHS). Positions 439, 443, 450, 477, 479, 481, 486, 511, 513, 515, 517, and 522 each coordinate Ca(2+).

In terms of tissue distribution, abundantly expressed in many tissues. Expressed in brain, colon, heart, kidney, liver, lung, liver, pancreas, placenta, skeletal muscle, testis and thymus. Highest expression in colon, testis, lung, placenta and brain.

This is Calcyphosin-2 from Homo sapiens (Human).